The primary structure comprises 225 residues: UPF0758 protein BCE33L4198 (225 aa).

Positions 103–225 (SIRNPEDCAR…FVSLKEKGHI (123 aa)) constitute an MPN domain. Residues His174, His176, and Asp187 each contribute to the Zn(2+) site. Positions 174 to 187 (HNHPSGDPAPSRED) match the JAMM motif motif.

The protein belongs to the UPF0758 family.

The chain is UPF0758 protein BCE33L4198 from Bacillus cereus (strain ZK / E33L).